A 117-amino-acid chain; its full sequence is Large ribosomal subunit protein eL34 (117 aa).

A Phosphoserine modification is found at S12. Residues 16-28 (ASNKTRLSRTPGQ) show a composition bias toward polar residues. The tract at residues 16–35 (ASNKTRLSRTPGQQDRLPLH) is disordered. K108 participates in a covalent cross-link: Glycyl lysine isopeptide (Lys-Gly) (interchain with G-Cter in SUMO2).

It belongs to the eukaryotic ribosomal protein eL34 family. In terms of assembly, component of the large ribosomal subunit.

The protein localises to the cytoplasm. The protein resides in the cytosol. It localises to the endoplasmic reticulum. Its function is as follows. Component of the large ribosomal subunit. The ribosome is a large ribonucleoprotein complex responsible for the synthesis of proteins in the cell. This is Large ribosomal subunit protein eL34 (RPL34) from Vicugna pacos (Alpaca).